Reading from the N-terminus, the 1889-residue chain is Protein TIC 214 (1889 aa).

Transmembrane regions (helical) follow at residues 11-31 (LISL…YYGF), 67-87 (FIAG…HLAL), 88-108 (GKPH…FFWN), 127-147 (LSIQ…HFIL), 175-195 (VGWL…LVWI), and 224-244 (IFSI…PSPI). Residues 255-265 (PEEVGESEEER) show a composition bias toward acidic residues. 2 disordered regions span residues 255-303 (PEEV…PSKE) and 1610-1633 (SNQE…KKKQ). Over residues 279–293 (NQKQGTEENTSSSLF) the composition is skewed to polar residues.

Belongs to the TIC214 family. Part of the Tic complex.

The protein resides in the plastid. The protein localises to the chloroplast inner membrane. In terms of biological role, involved in protein precursor import into chloroplasts. May be part of an intermediate translocation complex acting as a protein-conducting channel at the inner envelope. This chain is Protein TIC 214, found in Gossypium barbadense (Sea Island cotton).